The sequence spans 174 residues: MSAPPPLQIREANAHLAAVHRRAAELERRLLAAERTIGAQAERLACHDQHLRAALDELGRAKDREISALQEQLLSSEATVRSLQAAVDQRDQMIQQLQPRADLLQDITRHRPPLAALLATLEEAEELGPLPASHSHRAQLLPDGPGPPLGNNMGKEEGQDDQDDQQPAVFGTTV.

Residues 7-97 adopt a coiled-coil conformation; it reads LQIREANAHL…DQRDQMIQQL (91 aa). The segment at 128-174 is disordered; sequence GPLPASHSHRAQLLPDGPGPPLGNNMGKEEGQDDQDDQQPAVFGTTV.

It is found in the cytoplasm. The sequence is that of Vimentin-type intermediate filament-associated coiled-coil protein (Vmac) from Mus musculus (Mouse).